The chain runs to 533 residues: tRNA(Ile)-lysidine synthase (533 aa).

21–26 is a binding site for ATP; sequence SGGADS. One can recognise a CMP/dCMP-type deaminase domain in the interval 377–500; sequence DLLDTAMGEA…DLLSSHWGHV (124 aa).

This sequence belongs to the tRNA(Ile)-lysidine synthase family.

It localises to the cytoplasm. The enzyme catalyses cytidine(34) in tRNA(Ile2) + L-lysine + ATP = lysidine(34) in tRNA(Ile2) + AMP + diphosphate + H(+). Functionally, ligates lysine onto the cytidine present at position 34 of the AUA codon-specific tRNA(Ile) that contains the anticodon CAU, in an ATP-dependent manner. Cytidine is converted to lysidine, thus changing the amino acid specificity of the tRNA from methionine to isoleucine. In Deinococcus deserti (strain DSM 17065 / CIP 109153 / LMG 22923 / VCD115), this protein is tRNA(Ile)-lysidine synthase.